The following is an 874-amino-acid chain: MAKWVYKFEEGNASMRNLLGGKGCNLAEMTILGMPIPQGFTVTTEACTEYYNSGKQITQEIQDQIFEAITWLEELNGKKFGDTEDPLLVSVRSGARASMPGMMDTILNLGLNDVAVEGFAKKTGNPRFAYDSYRRFIQMYSDVVMEVPKSHFEKIIDAMKEEKGVHFDTDLTADDLKELAEKFKAVYKEAMNGEEFPQEPKDQLMGAVKAVFRSWDNPRAIVYRRMNDIPGDWGTAVNVQTMVFGNKGETSGTGVAFTRNPSTGEKGIYGEYLINAQGEDVVAGVRTPQPITQLENDMPDCYKQFMDLAMKLEKHFRDMQDMEFTIEEGKLYFLQTRNGKRTAPAALQIACDLVDEGMITEEEAVVRIEAKSLDQLLHPTFNPAALKAGEVIGSALPASPGAAAGKVYFTADEAKAAHEKGERVILVRLETSPEDIEGMHAAEGILTVRGGMTSHAAVVARGMGTCCVSGCGEIKINEEAKTFELGGHTFAEGDYISLDGSTGKIYKGDIETQEASVSGSFERIMVWADKFRTLKVRTNADTPEDTLNAVKLGAEGIGLCRTEHMFFEADRIMKIRKMILSDSVEAREEALNELIPFQKGDFKAMYKALEGRPMTVRYLDPPLHEFVPHTEEEQAELAKNMGLTLAEVKAKVDELHEFNPMMGHRGCRLAVTYPEIAKMQTRAVMEAAIEVKEETGIDIVPEIMIPLVGEKKELKFVKDVVVEVAEQVKKEKGSDMQYHIGTMIEIPRAALTADAIAEEAEFFSFGTNDLTQMTFGFSRDDAGKFLDSYYKAKIYESDPFARLDQTGVGQLVEMAVKKGRQTRPGLKCGICGEHGGDPSSVEFCHKVGLNYVSCSPFRVPIARLAAAQAALNNK.

The interval 2–340 (AKWVYKFEEG…LYFLQTRNGK (339 aa)) is N-terminal. Arginine 92 provides a ligand contact to ATP. Residues 340–399 (KRTAPAALQIACDLVDEGMITEEEAVVRIEAKSLDQLLHPTFNPAALKAGEVIGSALPAS) are linker 1. The segment at 400-498 (PGAAAGKVYF…TFAEGDYISL (99 aa)) is central. Phosphothreonine; by PDRP1 is present on threonine 453. The Tele-phosphohistidine intermediate role is filled by histidine 455. A linker 2 region spans residues 499–533 (DGSTGKIYKGDIETQEASVSGSFERIMVWADKFRT). Residues 534–874 (LKVRTNADTP…AAAQAALNNK (341 aa)) are C-terminal. Residues arginine 561, arginine 617, glutamate 745, glycine 766, threonine 767, asparagine 768, and aspartate 769 each contribute to the substrate site. Residue glutamate 745 coordinates Mg(2+). Aspartate 769 contributes to the Mg(2+) binding site. Catalysis depends on cysteine 831, which acts as the Proton donor.

Belongs to the PEP-utilizing enzyme family. As to quaternary structure, homodimer. Mg(2+) is required as a cofactor. Post-translationally, phosphorylation of Thr-453 in the dark inactivates the enzyme. Dephosphorylation upon light stimulation reactivates the enzyme.

The enzyme catalyses pyruvate + phosphate + ATP = phosphoenolpyruvate + AMP + diphosphate + H(+). Activated by light-induced dephosphorylation. Inhibited by dark-induced phosphorylation. Both reactions are catalyzed by PDRP1. In terms of biological role, catalyzes the reversible phosphorylation of pyruvate and phosphate. In E.histolytica and C.symbiosus, PPDK functions in the direction of ATP synthesis. The chain is Pyruvate, phosphate dikinase (ppdK) from Clostridium symbiosum (Bacteroides symbiosus).